The sequence spans 356 residues: Peptide chain release factor 1 (356 aa).

Glutamine 234 carries the post-translational modification N5-methylglutamine.

This sequence belongs to the prokaryotic/mitochondrial release factor family. Methylated by PrmC. Methylation increases the termination efficiency of RF1.

The protein resides in the cytoplasm. In terms of biological role, peptide chain release factor 1 directs the termination of translation in response to the peptide chain termination codons UAG and UAA. In Exiguobacterium sp. (strain ATCC BAA-1283 / AT1b), this protein is Peptide chain release factor 1.